We begin with the raw amino-acid sequence, 457 residues long: UDP-N-acetylmuramoyl-tripeptide--D-alanyl-D-alanine ligase (457 aa).

ATP is bound at residue 113 to 119 (GSNGKTT).

It belongs to the MurCDEF family. MurF subfamily.

Its subcellular location is the cytoplasm. It carries out the reaction D-alanyl-D-alanine + UDP-N-acetyl-alpha-D-muramoyl-L-alanyl-gamma-D-glutamyl-meso-2,6-diaminopimelate + ATP = UDP-N-acetyl-alpha-D-muramoyl-L-alanyl-gamma-D-glutamyl-meso-2,6-diaminopimeloyl-D-alanyl-D-alanine + ADP + phosphate + H(+). The protein operates within cell wall biogenesis; peptidoglycan biosynthesis. In terms of biological role, involved in cell wall formation. Catalyzes the final step in the synthesis of UDP-N-acetylmuramoyl-pentapeptide, the precursor of murein. This is UDP-N-acetylmuramoyl-tripeptide--D-alanyl-D-alanine ligase from Bacillus subtilis (strain 168).